The sequence spans 556 residues: Dihydroxy-acid dehydratase (556 aa).

Aspartate 78 contacts Mg(2+). Cysteine 119 serves as a coordination point for [2Fe-2S] cluster. Positions 120 and 121 each coordinate Mg(2+). Lysine 121 bears the N6-carboxylysine mark. Cysteine 191 is a binding site for [2Fe-2S] cluster. Glutamate 442 serves as a coordination point for Mg(2+). Serine 468 functions as the Proton acceptor in the catalytic mechanism.

Belongs to the IlvD/Edd family. As to quaternary structure, homodimer. [2Fe-2S] cluster serves as cofactor. The cofactor is Mg(2+).

The enzyme catalyses (2R)-2,3-dihydroxy-3-methylbutanoate = 3-methyl-2-oxobutanoate + H2O. The catalysed reaction is (2R,3R)-2,3-dihydroxy-3-methylpentanoate = (S)-3-methyl-2-oxopentanoate + H2O. The protein operates within amino-acid biosynthesis; L-isoleucine biosynthesis; L-isoleucine from 2-oxobutanoate: step 3/4. It functions in the pathway amino-acid biosynthesis; L-valine biosynthesis; L-valine from pyruvate: step 3/4. Functions in the biosynthesis of branched-chain amino acids. Catalyzes the dehydration of (2R,3R)-2,3-dihydroxy-3-methylpentanoate (2,3-dihydroxy-3-methylvalerate) into 2-oxo-3-methylpentanoate (2-oxo-3-methylvalerate) and of (2R)-2,3-dihydroxy-3-methylbutanoate (2,3-dihydroxyisovalerate) into 2-oxo-3-methylbutanoate (2-oxoisovalerate), the penultimate precursor to L-isoleucine and L-valine, respectively. This is Dihydroxy-acid dehydratase from Caldanaerobacter subterraneus subsp. tengcongensis (strain DSM 15242 / JCM 11007 / NBRC 100824 / MB4) (Thermoanaerobacter tengcongensis).